The sequence spans 612 residues: Proton channel OTOP1 (612 aa).

Over residues 1-46 the composition is skewed to low complexity; that stretch reads MLEGLGSPASPRAAASASVAGSSGPAACSPPSSSAPRSPESPAPRR. The tract at residues 1 to 50 is disordered; that stretch reads MLEGLGSPASPRAAASASVAGSSGPAACSPPSSSAPRSPESPAPRRGGVR. Residues 1-58 are Cytoplasmic-facing; it reads MLEGLGSPASPRAAASASVAGSSGPAACSPPSSSAPRSPESPAPRRGGVRASVPQKLA. A helical membrane pass occupies residues 59 to 80; sequence EMLSSQYGLIVFVAGLLLLLAW. The Extracellular segment spans residues 81 to 88; it reads AVHAAGVS. Residues 89–112 traverse the membrane as a helical segment; sequence KSDLLCFLTALMLLQLLWMLWYVG. Residues 113 to 130 are Cytoplasmic-facing; sequence RSSAHRRLFRLKDTHAGA. A helical membrane pass occupies residues 131 to 153; it reads GWLRGSITLFAVITVILGCLKIG. Over 154 to 163 the chain is Extracellular; that stretch reads YFIGFSECLS. Residues 164 to 188 traverse the membrane as a helical segment; sequence ATEGVFPVTHSVHTLLQVYFLWGHA. The Cytoplasmic segment spans residues 189–196; that stretch reads KDIIQSFK. Residues 197–223 traverse the membrane as a helical segment; it reads TLERFGVIHSVFTNLLLWANGVLNESK. Residues 224–264 lie on the Extracellular side of the membrane; that stretch reads HQLNEHKERLITLGFGNITTVLDDHTPQCNCTPPTLCTAIS. Residues 265–290 traverse the membrane as a helical segment; sequence HGIYYLYPFNIEYQILASTMLYVLWK. Residues 291–311 lie on the Cytoplasmic side of the membrane; sequence NIGRKVDSHQHQKMQFKSDGV. Residues 312–334 form a helical membrane-spanning segment; it reads MVGAVLGLTVLAATIAVVVVYLI. Residues 335–344 lie on the Extracellular side of the membrane; sequence HIGRSKTKSE. Residues 345–370 form a helical membrane-spanning segment; that stretch reads SALIMFYLYAITLLMLMGAAGLAGIR. The Cytoplasmic portion of the chain corresponds to 371–388; that stretch reads IYRIDEKSLDESKNPARK. A helical membrane pass occupies residues 389–413; the sequence is LDSDLLVGTASGSWLISWGSILAIL. The Extracellular segment spans residues 414–423; it reads CAEGHPRYTW. Residues 424-444 form a helical membrane-spanning segment; sequence YNLPYSILAIVEKYIQNLFIF. Topologically, residues 445 to 544 are cytoplasmic; that stretch reads ESIHREPEKL…QGNAKRKVLR (100 aa). The disordered stretch occupies residues 499 to 525; sequence ANGNVCMRESHDKEEEKQEESSWGGSP. Residues 506-518 are compositionally biased toward basic and acidic residues; it reads RESHDKEEEKQEE. The helical transmembrane segment at 545–563 threads the bilayer; the sequence is NIAAFLFLCNISLWIPPAF. At 564–581 the chain is on the extracellular side; it reads GCRPEYDNGLEEIVFGFE. The chain crosses the membrane as a helical span at residues 582 to 605; that stretch reads PWIIVVNLAMPFSIFYRMHAAASL. At 606-612 the chain is on the cytoplasmic side; that stretch reads FEVYCKI.

This sequence belongs to the otopetrin family. Homodimer. Interacts with STAT1, independently of STAT1 phosphorylation status.

It localises to the cell membrane. Its subcellular location is the cell projection. The protein localises to the microvillus. The enzyme catalyses H(+)(in) = H(+)(out). Its activity is regulated as follows. Activated by both acid and alkali, with proton influx in response to extracellular acid and proton efflux during alkali stimulation. Inhibited by Zn(2+); this inhibition is thought to be pH-sensitive. Currents evoked in response to mild acid (pH 6.0) stimulus may also be mildly potentiated by exposure to Zn(2+). Activated by NH(4)Cl. Proton-selective ion channel. Biphasically modulated by acid and alkali, mediating proton influx and efflux in response to extracellular acid and base stimulation, respectively. Sour taste receptor, which carries inward currents in response to extracellular acidification. Sensor for ammonium chloride (NH(4)Cl) in taste receptor cells. NH(4)Cl acts by increasing the intracellular pH, thereby generating a driving force for proton entry through OTOP1 channel. Might also participate in alkaline sensation. Plays a role in the regulation of Ca(2+) flux in response to purigenic (ATP, ADP and UDP) stimuli, leading to increase in cytosolic Ca(2+) due to influx of extracellular calcium. May play this role by inhibiting P2Y purinoceptor-mediated Ca(2+) release in a Ca(2+)-dependent manner and promote an influx of Ca(2+) in response to ATP. Through this mechanism and possibly others, plays a role in the formation and function of calcium carbonate-based structures in the vestibular system of the inner ear, called otoconia, that sense gravity and linear acceleration. In obesity, may attenuate adipose tissue inflammation, through the negative regulation of IFNG signaling, hence may play an adaptive role in the maintainance of metabolic homeostasis. Following alkali activation, may also be permeable Na(+), K(+), Cs(+) and Li(+). The chain is Proton channel OTOP1 from Homo sapiens (Human).